Consider the following 430-residue polypeptide: Serine--tRNA ligase (430 aa).

237 to 239 (TAE) lines the L-serine pocket. Position 268–270 (268–270 (RSE)) interacts with ATP. L-serine is bound at residue glutamate 291. 355-358 (EISS) contributes to the ATP binding site. Serine 391 serves as a coordination point for L-serine.

This sequence belongs to the class-II aminoacyl-tRNA synthetase family. Type-1 seryl-tRNA synthetase subfamily. In terms of assembly, homodimer. The tRNA molecule binds across the dimer.

The protein localises to the cytoplasm. The enzyme catalyses tRNA(Ser) + L-serine + ATP = L-seryl-tRNA(Ser) + AMP + diphosphate + H(+). It catalyses the reaction tRNA(Sec) + L-serine + ATP = L-seryl-tRNA(Sec) + AMP + diphosphate + H(+). It functions in the pathway aminoacyl-tRNA biosynthesis; selenocysteinyl-tRNA(Sec) biosynthesis; L-seryl-tRNA(Sec) from L-serine and tRNA(Sec): step 1/1. In terms of biological role, catalyzes the attachment of serine to tRNA(Ser). Is also able to aminoacylate tRNA(Sec) with serine, to form the misacylated tRNA L-seryl-tRNA(Sec), which will be further converted into selenocysteinyl-tRNA(Sec). This Shigella dysenteriae serotype 1 (strain Sd197) protein is Serine--tRNA ligase.